We begin with the raw amino-acid sequence, 298 residues long: Protoheme IX farnesyltransferase (298 aa).

A run of 8 helical transmembrane segments spans residues 16–36 (VVALIVFTALVGMFLAIPGMP), 45–65 (ALGFLGIWLAASAAAAINQLL), 97–117 (VLIVISMTILVVWVNVITAVL), 141–161 (IVIGGLAGATPPMLGWAAVTG), 172–192 (SLLVLIIFIWTPPHFWALAIF), 223–243 (VLLAIVTLLPVAVGMSGVFYL), 244–264 (GGAVVLNAVFLWYAWRMLDPP), and 277–297 (VVYLMALFAFLMVDHLLLPWV).

Belongs to the UbiA prenyltransferase family. Protoheme IX farnesyltransferase subfamily.

The protein localises to the cell inner membrane. The enzyme catalyses heme b + (2E,6E)-farnesyl diphosphate + H2O = Fe(II)-heme o + diphosphate. Its pathway is porphyrin-containing compound metabolism; heme O biosynthesis; heme O from protoheme: step 1/1. Converts heme B (protoheme IX) to heme O by substitution of the vinyl group on carbon 2 of heme B porphyrin ring with a hydroxyethyl farnesyl side group. The chain is Protoheme IX farnesyltransferase from Xanthomonas campestris pv. campestris (strain 8004).